Consider the following 424-residue polypeptide: 3-isopropylmalate dehydratase large subunit 1 (424 aa).

Residues C303, C363, and C366 each contribute to the [4Fe-4S] cluster site.

This sequence belongs to the aconitase/IPM isomerase family. LeuC type 2 subfamily. Heterodimer of LeuC and LeuD. [4Fe-4S] cluster is required as a cofactor.

The enzyme catalyses (2R,3S)-3-isopropylmalate = (2S)-2-isopropylmalate. It functions in the pathway amino-acid biosynthesis; L-leucine biosynthesis; L-leucine from 3-methyl-2-oxobutanoate: step 2/4. Catalyzes the isomerization between 2-isopropylmalate and 3-isopropylmalate, via the formation of 2-isopropylmaleate. This Pyrococcus furiosus (strain ATCC 43587 / DSM 3638 / JCM 8422 / Vc1) protein is 3-isopropylmalate dehydratase large subunit 1.